Here is a 115-residue protein sequence, read N- to C-terminus: MSKVMIIMLVGMIFAIISTVSGGAGCSSMGASCQIGSATCCGVCNVHTLRCEARIGPPINTQPTRRTQPTRRTRGPKVTRSSRPTNRTRRPKPTNRSRRPKPTHRRKPTNRPRSH.

An N-terminal signal peptide occupies residues 1–22 (MSKVMIIMLVGMIFAIISTVSG). Intrachain disulfides connect Cys-26–Cys-41, Cys-33–Cys-44, and Cys-40–Cys-51. The interval 54-115 (RIGPPINTQP…RKPTNRPRSH (62 aa)) is disordered. Composition is skewed to basic residues over residues 68-77 (QPTRRTRGPK) and 86-115 (NRTR…PRSH).

Expressed by the venom gland.

It is found in the secreted. This Pimpla hypochondriaca (Parasitoid wasp) protein is Cysteine-rich venom protein 5.